The primary structure comprises 132 residues: Intraflagellar transport protein 20 homolog (132 aa).

Residues 74–123 (GARNLLKSVEKQREAQHQQLQALIAEKKMQLERYRIEYEALQKVEAEQSE) are a coiled coil.

The protein resides in the golgi apparatus. It localises to the cis-Golgi network. Its subcellular location is the cytoplasm. It is found in the cytoskeleton. The protein localises to the microtubule organizing center. The protein resides in the centrosome. It localises to the centriole. Its subcellular location is the cell projection. It is found in the cilium. The protein localises to the cytoplasmic vesicle. The protein resides in the secretory vesicle. It localises to the acrosome. In terms of biological role, involved in ciliary process assembly. May play a role in the trafficking of ciliary membrane proteins from the Golgi complex to the cilium. Regulates the platelet-derived growth factor receptor-alpha (PDGFRA) signaling pathway. Plays an important role in spermatogenesis, particularly spermiogenesis, when germ cells form flagella. In Danio rerio (Zebrafish), this protein is Intraflagellar transport protein 20 homolog (ift20).